Consider the following 349-residue polypeptide: KH domain-containing, RNA-binding, signal transduction-associated protein 2 (349 aa).

A KH domain is found at 65–135 (LIPVKQYPKF…HLSDELHVLI (71 aa)). Disordered regions lie at residues 181 to 263 (SEES…PPPA) and 320 to 349 (EEWTTTRSSLKAPPPRSARGGYREHPYGRY). A compositionally biased stretch (low complexity) spans 218–231 (RGVLTPRGTTVTRG). Arginine 230 and arginine 240 each carry omega-N-methylarginine. Residues 340–349 (GYREHPYGRY) are compositionally biased toward basic and acidic residues.

Belongs to the KHDRBS family. As to quaternary structure, self-associates to form homooligomers. Interacts with SAFB, SFRS9 and YTHDC1. Found in a complex with KHDRBS1, KHDRBS2 and KHDRBS3. Interacts with RBMX. Interacts with the SH3 domains of FYN and PLCG1. Interacts with the SH2 domains of FYN, GRAP2, PLCG1 and RASA1. Interacts with RBMX. In terms of processing, methylated. Phosphorylated on tyrosine residues by FYN. Tyrosine phosphorylated by PTK6 and SRC. Tyrosine phosphorylated by SRC during mitosis. As to expression, expressed in the cortex, cerebellum, striatum, midbrain, brainstem and thalamus of the brain (at protein level). Expressed in neurons (at protein level). Expressed in brain and testis. Expressed in the dentate gyrus of the hippocampus.

It localises to the nucleus. In terms of biological role, RNA-binding protein that plays a role in the regulation of alternative splicing and influences mRNA splice site selection and exon inclusion. Its phosphorylation by FYN inhibits its ability to regulate splice site selection. Induces an increased concentration-dependent incorporation of exon in CD44 pre-mRNA by direct binding to purine-rich exonic enhancer. May function as an adapter protein for Src kinases during mitosis. Binds both poly(A) and poly(U) homopolymers. Phosphorylation by PTK6 inhibits its RNA-binding ability. The protein is KH domain-containing, RNA-binding, signal transduction-associated protein 2 (Khdrbs2) of Rattus norvegicus (Rat).